The sequence spans 227 residues: Cytidylate kinase (227 aa).

12 to 20 (GPSGAGKGT) is a binding site for ATP.

The protein belongs to the cytidylate kinase family. Type 1 subfamily.

It is found in the cytoplasm. It catalyses the reaction CMP + ATP = CDP + ADP. It carries out the reaction dCMP + ATP = dCDP + ADP. In Xanthomonas axonopodis pv. citri (strain 306), this protein is Cytidylate kinase.